Reading from the N-terminus, the 66-residue chain is Large ribosomal subunit protein bL35 (66 aa).

It belongs to the bacterial ribosomal protein bL35 family.

The sequence is that of Large ribosomal subunit protein bL35 from Neorickettsia sennetsu (strain ATCC VR-367 / Miyayama) (Ehrlichia sennetsu).